The sequence spans 3589 residues: D-lysergyl-peptide-synthetase subunit 1 (3589 aa).

An adenylation (A) domain 1 region spans residues 344-742 (NCHSRPDSLA…IGRKDLQVKV (399 aa)). The Carrier 1 domain occupies 883 to 952 (VERRLQLLFA…KLRDLAAASS (70 aa)). Ser915 carries the post-translational modification O-(pantetheine 4'-phosphoryl)serine. Positions 995–1380 (EDIYPCTSLQ…SQFQHILTQI (386 aa)) are condensation (C) domain 1. The adenylation (A) domain 2 stretch occupies residues 1424-1826 (QAKAQMQPEA…RRKDSQVKLR (403 aa)). Residues 1974–2042 (LERELQKIWA…TIEKLAAAAV (69 aa)) form the Carrier 2 domain. The residue at position 2006 (Ser2006) is an O-(pantetheine 4'-phosphoryl)serine. The interval 2087–2509 (VEDIYPCSPI…IEMLDEEHRS (423 aa)) is condensation (C) domain 2. The interval 2534 to 2929 (CLESPESPAI…GRKDDQVKIR (396 aa)) is adenylation (A) domain 3. A Carrier 3 domain is found at 3064 to 3132 (LETRLQELVG…RLSELAVVLN (69 aa)). O-(pantetheine 4'-phosphoryl)serine is present on Ser3096. Residues 3187-3585 (TNFIALHFSQ…TYPESLVSEL (399 aa)) form a cyclization (Cyc) domain region.

This sequence belongs to the NRP synthetase family.

The protein operates within alkaloid biosynthesis; ergot alkaloid biosynthesis. In terms of biological role, D-lysergyl-peptide-synthetase subunit 1; part of the gene cluster that mediates the biosynthesis of fungal ergot alkaloid ergovaline, the predominant ergopeptine product in E.festucae var. lolii. DmaW catalyzes the first step of ergot alkaloid biosynthesis by condensing dimethylallyl diphosphate (DMAP) and tryptophan to form 4-dimethylallyl-L-tryptophan. The second step is catalyzed by the methyltransferase easF that methylates 4-dimethylallyl-L-tryptophan in the presence of S-adenosyl-L-methionine, resulting in the formation of 4-dimethylallyl-L-abrine. The catalase easC and the FAD-dependent oxidoreductase easE then transform 4-dimethylallyl-L-abrine to chanoclavine-I which is further oxidized by easD in the presence of NAD(+), resulting in the formation of chanoclavine-I aldehyde. Agroclavine dehydrogenase easG then mediates the conversion of chanoclavine-I aldehyde to agroclavine via a non-enzymatic adduct reaction: the substrate is an iminium intermediate that is formed spontaneously from chanoclavine-I aldehyde in the presence of glutathione. The presence of easA is not required to complete this reaction. Further conversion of agroclavine to paspalic acid is a two-step process involving oxidation of agroclavine to elymoclavine and of elymoclavine to paspalic acid, the second step being performed by the elymoclavine oxidase cloA. Paspalic acid is then further converted to D-lysergic acid. Ergovaline is assembled from D-lysergic acid and three different amino acids by the D-lysergyl-peptide-synthetase composed of a monomudular (lpsB) and a trimodular (lpsA) nonribosomal peptide synthetase subunit. This is D-lysergyl-peptide-synthetase subunit 1 from Epichloe festucae var. lolii (Neotyphodium lolii).